A 589-amino-acid chain; its full sequence is uncharacterized protein (589 aa).

An RRM domain is found at 242–314; sequence TALEVRNIPE…RFIKIFWYNP (73 aa). Disordered regions lie at residues 322-348, 443-465, and 566-589; these read PKKF…VDPA, ESPA…RGTN, and TSME…GRWR. Phosphoserine is present on S330. Over residues 330–340 the composition is skewed to low complexity; that stretch reads SPTTSDSSNVE. Residue T332 is modified to Phosphothreonine. Position 334 is a phosphoserine (S334). The span at 566–579 shows a compositional bias: polar residues; it reads TSMETGESNTSDNM.

Its subcellular location is the nucleus. This is an uncharacterized protein from Schizosaccharomyces pombe (strain 972 / ATCC 24843) (Fission yeast).